Reading from the N-terminus, the 93-residue chain is Large ribosomal subunit protein eL42 (93 aa).

Residues Cys-11, Cys-14, Cys-71, and Cys-74 each coordinate Zn(2+). Residues Cys-11–Cys-74 form a C4-type zinc finger.

Belongs to the eukaryotic ribosomal protein eL42 family. Part of the 50S ribosomal subunit. Requires Zn(2+) as cofactor.

Functionally, binds to the 23S rRNA. The polypeptide is Large ribosomal subunit protein eL42 (Thermoplasma acidophilum (strain ATCC 25905 / DSM 1728 / JCM 9062 / NBRC 15155 / AMRC-C165)).